The sequence spans 152 residues: Ribosome maturation factor RimP (152 aa).

This sequence belongs to the RimP family.

It is found in the cytoplasm. Required for maturation of 30S ribosomal subunits. The polypeptide is Ribosome maturation factor RimP (Alkalilimnicola ehrlichii (strain ATCC BAA-1101 / DSM 17681 / MLHE-1)).